We begin with the raw amino-acid sequence, 360 residues long: UDP-3-O-acylglucosamine N-acyltransferase (360 aa).

Residue histidine 248 is the Proton acceptor of the active site.

This sequence belongs to the transferase hexapeptide repeat family. LpxD subfamily. In terms of assembly, homotrimer.

It carries out the reaction a UDP-3-O-[(3R)-3-hydroxyacyl]-alpha-D-glucosamine + a (3R)-hydroxyacyl-[ACP] = a UDP-2-N,3-O-bis[(3R)-3-hydroxyacyl]-alpha-D-glucosamine + holo-[ACP] + H(+). It participates in bacterial outer membrane biogenesis; LPS lipid A biosynthesis. In terms of biological role, catalyzes the N-acylation of UDP-3-O-acylglucosamine using 3-hydroxyacyl-ACP as the acyl donor. Is involved in the biosynthesis of lipid A, a phosphorylated glycolipid that anchors the lipopolysaccharide to the outer membrane of the cell. In Chlamydia pneumoniae (Chlamydophila pneumoniae), this protein is UDP-3-O-acylglucosamine N-acyltransferase.